Reading from the N-terminus, the 218-residue chain is DNA-directed RNA polymerase III subunit RPC7-like (218 aa).

A disordered region spans residues 133 to 218; that stretch reads LPKRPPKTTE…SDDNMDEAIY (86 aa). A compositionally biased stretch (basic and acidic residues) spans 139–160; sequence KTTEDKEETIQKLETLEKKEEE. Composition is skewed to acidic residues over residues 161–193 and 201–218; these read VTSE…EETD and NGED…EAIY.

Belongs to the eukaryotic RPC7 RNA polymerase subunit family. As to quaternary structure, component of the RNA polymerase III (Pol III) complex consisting of 17 subunits. Pol III exists as two alternative complexes defined by the mutually exclusive incorporation of subunit POLR3G/RPC7alpha or POLR3GL/RPC7beta. Found in a trimeric complex with POLR3C/RPC3 and POLR3F/RPC6. Directly interacts with POLR3C. Widely expressed. Expressed in CD4-positive T cells.

Its subcellular location is the nucleus. In terms of biological role, DNA-dependent RNA polymerase catalyzes the transcription of DNA into RNA using the four ribonucleoside triphosphates as substrates. Specific peripheric component of RNA polymerase III which synthesizes small RNAs, such as 5S rRNA and tRNAs. The sequence is that of DNA-directed RNA polymerase III subunit RPC7-like from Homo sapiens (Human).